The following is a 908-amino-acid chain: Protein translocase subunit SecA (908 aa).

ATP-binding positions include Q87, 105-109 (GEGKT), and D512. Positions 876 to 908 (QAPMIRDGEKVGRNDPCPCGSGRKYKQCHGKLS) are disordered. C892, C894, C903, and H904 together coordinate Zn(2+). Positions 898–908 (RKYKQCHGKLS) are enriched in basic residues.

Belongs to the SecA family. In terms of assembly, monomer and homodimer. Part of the essential Sec protein translocation apparatus which comprises SecA, SecYEG and auxiliary proteins SecDF-YajC and YidC. It depends on Zn(2+) as a cofactor.

It localises to the cell inner membrane. Its subcellular location is the cytoplasm. The enzyme catalyses ATP + H2O + cellular proteinSide 1 = ADP + phosphate + cellular proteinSide 2.. Part of the Sec protein translocase complex. Interacts with the SecYEG preprotein conducting channel. Has a central role in coupling the hydrolysis of ATP to the transfer of proteins into and across the cell membrane, serving both as a receptor for the preprotein-SecB complex and as an ATP-driven molecular motor driving the stepwise translocation of polypeptide chains across the membrane. This is Protein translocase subunit SecA from Shewanella baltica (strain OS185).